Here is a 932-residue protein sequence, read N- to C-terminus: MTNERKEVSEAPVNFGANLGLMLDLYDDFLQDPSSVPEDLQVLFSIIKNDDSIVPALKSTSSQNSDGTIKRVMRLIDNIRQYGHLKADIYPVNPPKRKHVPKLEIEDFDLDQQTLEGISAGIVSDHFADIYDNAYEAILRMEKRYKGPIAFEYTHINNNTERGWLKRRIETPYKVTLNNNEKRALFKQLAYVEGFEKYLHKNFVGAKRFSIEGVDALVPMLQRTITIAAKEGIKNIQIGMAHRGRLNVLTHVLEKPYEMMISEFMHTDPMKFLPEDGSLQLTAGWTGDVKYHLGGIKTTDSYGTMQRIALANNPSHLEIVAPVVEGRTRAAQDDTQRAGAPTTDHHKAMPIIIHGDAAYPGQGINFETMNLGNLKGYSTGGSLHIITNNRIGFTTEPIDARSTTYSTDVAKGYDVPIFHVNADDVEATIEAIDIAMEFRKEFHKDVVIDLVGYRRFGHNEMDEPSITNPVPYQNIRKHDSVEYVFGKKLVNEGVISEDEMHSFIEQVQKELRQAHDKINKADKMDNPDMEKPADLALPLQADEQSFTFDHLKEINDALLTYPDGFNILKKLNKVLEKRHEPFNKEDGLVDWAQAEQLAFATILQDGTPIRLTGQDSERGTFSHRHAVLHDEQTGETYTPLHHVPDQKATFDIHNSPLSEAAVVGFEYGYNVENKKSFNIWEAQYGDFANMSQMIFDNFLFSSRSKWGERSGLTLFLPHAYEGQGPEHSSARLERFLQLAAENNCTVVNLSSSSNYFHLLRAQAASLDSEQMRPLVVMSPKSLLRNKTVAKPIDEFTSGGFEPILTESYQADKVTKVILATGKMFIDLKEALAKNPDESVLLVAIERLYPFPEEEIEALLAQLPNLEEVSWVQEEPKNQGAWLYVYPYVKVLVADKYDLSYHGRIQRAAPAEGDGEIHKLVQNKIIENALKNN.

Belongs to the alpha-ketoglutarate dehydrogenase family. Homodimer. Part of the 2-oxoglutarate dehydrogenase (OGDH) complex composed of E1 (2-oxoglutarate dehydrogenase), E2 (dihydrolipoamide succinyltransferase) and E3 (dihydrolipoamide dehydrogenase); the complex contains multiple copies of the three enzymatic components (E1, E2 and E3). Requires thiamine diphosphate as cofactor.

The enzyme catalyses N(6)-[(R)-lipoyl]-L-lysyl-[protein] + 2-oxoglutarate + H(+) = N(6)-[(R)-S(8)-succinyldihydrolipoyl]-L-lysyl-[protein] + CO2. In terms of biological role, E1 component of the 2-oxoglutarate dehydrogenase (OGDH) complex which catalyzes the decarboxylation of 2-oxoglutarate, the first step in the conversion of 2-oxoglutarate to succinyl-CoA and CO(2). In Staphylococcus aureus (strain MW2), this protein is 2-oxoglutarate dehydrogenase E1 component.